Reading from the N-terminus, the 380-residue chain is Cytochrome b (380 aa).

4 helical membrane-spanning segments follow: residues 34-54, 78-99, 114-134, and 179-199; these read FGSL…LLAM, WLIR…FLHI, WNTG…GYVL, and FFAL…THLM. Heme b is bound by residues His-84 and His-98. Positions 183 and 197 each coordinate heme b. His-202 contacts a ubiquinone. Transmembrane regions (helical) follow at residues 227 to 247, 289 to 309, 321 to 341, and 348 to 368; these read LKDI…ALFS, LGGV…PFLH, LSQA…WVGS, and FIII…SLLP.

It belongs to the cytochrome b family. The cytochrome bc1 complex contains 11 subunits: 3 respiratory subunits (MT-CYB, CYC1 and UQCRFS1), 2 core proteins (UQCRC1 and UQCRC2) and 6 low-molecular weight proteins (UQCRH/QCR6, UQCRB/QCR7, UQCRQ/QCR8, UQCR10/QCR9, UQCR11/QCR10 and a cleavage product of UQCRFS1). This cytochrome bc1 complex then forms a dimer. Requires heme b as cofactor.

The protein resides in the mitochondrion inner membrane. Functionally, component of the ubiquinol-cytochrome c reductase complex (complex III or cytochrome b-c1 complex) that is part of the mitochondrial respiratory chain. The b-c1 complex mediates electron transfer from ubiquinol to cytochrome c. Contributes to the generation of a proton gradient across the mitochondrial membrane that is then used for ATP synthesis. The chain is Cytochrome b (MT-CYB) from Crossoptilon crossoptilon (White-eared pheasant).